The following is a 596-amino-acid chain: Myosin light chain kinase 2, skeletal/cardiac muscle (596 aa).

The disordered stretch occupies residues 1-224 (MATENGAVEL…AGQAKMQGDT (224 aa)). Ala2 is subject to N-acetylalanine. A compositionally biased stretch (basic and acidic residues) spans 40–63 (DPKKAPDPPTLKKDAKAPASEKGD). The segment covering 88-104 (EGSAGPPAALPQQTATP) has biased composition (low complexity). Phosphoserine occurs at positions 143, 149, and 151. Positions 189 to 209 (RPAKAEEGKNILAESQKEVGE) are enriched in basic and acidic residues. The 256-residue stretch at 285-540 (MNSKEALGGG…AAQCLAHPWL (256 aa)) folds into the Protein kinase domain. ATP is bound by residues 291–299 (LGGGKFGAV) and Lys314. Asp406 (proton acceptor) is an active-site residue. Thr445 bears the Phosphothreonine mark. A calmodulin-binding region spans residues 574 to 586 (IAVSAANRFKKIS).

It belongs to the protein kinase superfamily. CAMK Ser/Thr protein kinase family. As to quaternary structure, may interact with centrin. In terms of tissue distribution, heart and skeletal muscles. Increased expression in the apical tissue compared to the interventricular septal tissue.

The protein localises to the cytoplasm. The enzyme catalyses L-seryl-[myosin light chain] + ATP = O-phospho-L-seryl-[myosin light chain] + ADP + H(+). The catalysed reaction is L-threonyl-[myosin light chain] + ATP = O-phospho-L-threonyl-[myosin light chain] + ADP + H(+). Functionally, implicated in the level of global muscle contraction and cardiac function. Phosphorylates a specific serine in the N-terminus of a myosin light chain. This is Myosin light chain kinase 2, skeletal/cardiac muscle (MYLK2) from Homo sapiens (Human).